Here is a 435-residue protein sequence, read N- to C-terminus: Putative dimethyl sulfoxide reductase membrane subunit C (435 aa).

11 helical membrane-spanning segments follow: residues 22-42 (GWLG…AYQL), 57-77 (WGLY…GLIL), 95-115 (LGVL…LPDI), 135-155 (VWDF…LWLL), 186-206 (FWTA…TGWI), 220-240 (LVAP…LLVV), 257-277 (LTSL…YLLA), 281-301 (LPHA…FLIG), 304-324 (VYFW…LATP), 333-353 (IFTA…RLVF), and 392-412 (VEIA…MAGL).

Belongs to the NrfD family. As to quaternary structure, probable multiprotein complex that likely consists of DmsA, DmsB and DmsC.

It is found in the cell membrane. In terms of biological role, dimethyl sulfoxide (DMSO) reductase catalyzes the reduction of dimethyl sulfoxide (DMSO) to dimethyl sulfide (DMS) during anaerobic respiration; it can also use trimethylamine N-oxide (TMAO) as terminal electron acceptor. Subunit C is proposed to be a membrane anchoring subunit. The chain is Putative dimethyl sulfoxide reductase membrane subunit C (dmsC) from Halobacterium salinarum (strain ATCC 700922 / JCM 11081 / NRC-1) (Halobacterium halobium).